Reading from the N-terminus, the 881-residue chain is Alanine--tRNA ligase (881 aa).

Positions 565, 569, 672, and 676 each coordinate Zn(2+).

It belongs to the class-II aminoacyl-tRNA synthetase family. It depends on Zn(2+) as a cofactor.

Its subcellular location is the cytoplasm. The catalysed reaction is tRNA(Ala) + L-alanine + ATP = L-alanyl-tRNA(Ala) + AMP + diphosphate. In terms of biological role, catalyzes the attachment of alanine to tRNA(Ala) in a two-step reaction: alanine is first activated by ATP to form Ala-AMP and then transferred to the acceptor end of tRNA(Ala). Also edits incorrectly charged Ser-tRNA(Ala) and Gly-tRNA(Ala) via its editing domain. The polypeptide is Alanine--tRNA ligase (Novosphingobium aromaticivorans (strain ATCC 700278 / DSM 12444 / CCUG 56034 / CIP 105152 / NBRC 16084 / F199)).